The sequence spans 344 residues: Inositol 2-dehydrogenase/D-chiro-inositol 3-dehydrogenase (344 aa).

The protein belongs to the Gfo/Idh/MocA family. Homotetramer.

It carries out the reaction myo-inositol + NAD(+) = scyllo-inosose + NADH + H(+). The enzyme catalyses 1D-chiro-inositol + NAD(+) = scyllo-inosine + NADH + H(+). Its pathway is polyol metabolism; myo-inositol degradation into acetyl-CoA; acetyl-CoA from myo-inositol: step 1/7. Involved in the oxidation of myo-inositol (MI) and D-chiro-inositol (DCI) to 2-keto-myo-inositol (2KMI or 2-inosose) and 1-keto-D-chiro-inositol (1KDCI), respectively. This Bacillus velezensis (strain DSM 23117 / BGSC 10A6 / LMG 26770 / FZB42) (Bacillus amyloliquefaciens subsp. plantarum) protein is Inositol 2-dehydrogenase/D-chiro-inositol 3-dehydrogenase.